The sequence spans 434 residues: Putative ankyrin repeat protein FPV023 (434 aa).

7 ANK repeats span residues 33 to 62 (RLKI…DPVA), 134 to 163 (LTIS…DINF), 167 to 197 (IGNT…DINI), 201 to 230 (YGTT…DPNS), 236 to 265 (IGTK…DPNI), 269 to 299 (AGVT…DPNI), and 303 to 330 (NGTT…DINI).

The chain is Putative ankyrin repeat protein FPV023 from Fowlpox virus (strain NVSL) (FPV).